The chain runs to 179 residues: Large ribosomal subunit protein uL5 (179 aa).

It belongs to the universal ribosomal protein uL5 family. Part of the 50S ribosomal subunit; part of the 5S rRNA/L5/L18/L25 subcomplex. Contacts the 5S rRNA and the P site tRNA. Forms a bridge to the 30S subunit in the 70S ribosome.

In terms of biological role, this is one of the proteins that bind and probably mediate the attachment of the 5S RNA into the large ribosomal subunit, where it forms part of the central protuberance. In the 70S ribosome it contacts protein S13 of the 30S subunit (bridge B1b), connecting the 2 subunits; this bridge is implicated in subunit movement. Contacts the P site tRNA; the 5S rRNA and some of its associated proteins might help stabilize positioning of ribosome-bound tRNAs. The chain is Large ribosomal subunit protein uL5 from Francisella philomiragia subsp. philomiragia (strain ATCC 25017 / CCUG 19701 / FSC 153 / O#319-036).